Here is a 263-residue protein sequence, read N- to C-terminus: Methylesterase 3 (263 aa).

The active-site Acyl-ester intermediate is Ser85. Active-site charge relay system residues include Asp213 and His241.

The protein belongs to the AB hydrolase superfamily. Methylesterase family.

The catalysed reaction is methyl (indol-3-yl)acetate + H2O = (indol-3-yl)acetate + methanol + H(+). The enzyme catalyses methyl (-)-jasmonate + H2O = jasmonate + methanol + H(+). It participates in plant hormone biosynthesis. Its pathway is lipid metabolism; oxylipin biosynthesis. In terms of biological role, methylesterase shown to have carboxylesterase activity, methyl indole-3-acetic acid (MeIAA) esterase activity and methyl jasmonate (MeJA) esterase activity in vitro. The polypeptide is Methylesterase 3 (Arabidopsis thaliana (Mouse-ear cress)).